We begin with the raw amino-acid sequence, 315 residues long: Beta-ketoacyl-[acyl-carrier-protein] synthase III 2 (315 aa).

Catalysis depends on residues Cys-113 and His-241. Positions 242–246 (QANLR) are ACP-binding. Asn-271 is an active-site residue.

It belongs to the thiolase-like superfamily. FabH family. In terms of assembly, homodimer.

The protein resides in the cytoplasm. It carries out the reaction malonyl-[ACP] + acetyl-CoA + H(+) = 3-oxobutanoyl-[ACP] + CO2 + CoA. It participates in lipid metabolism; fatty acid biosynthesis. Catalyzes the condensation reaction of fatty acid synthesis by the addition to an acyl acceptor of two carbons from malonyl-ACP. Catalyzes the first condensation reaction which initiates fatty acid synthesis and may therefore play a role in governing the total rate of fatty acid production. Possesses both acetoacetyl-ACP synthase and acetyl transacylase activities. Its substrate specificity determines the biosynthesis of branched-chain and/or straight-chain of fatty acids. This is Beta-ketoacyl-[acyl-carrier-protein] synthase III 2 from Streptomyces avermitilis (strain ATCC 31267 / DSM 46492 / JCM 5070 / NBRC 14893 / NCIMB 12804 / NRRL 8165 / MA-4680).